Here is a 193-residue protein sequence, read N- to C-terminus: Phosphoheptose isomerase (193 aa).

One can recognise an SIS domain in the interval 37–193; the sequence is LADSFKAGGK…QLIEKEMVKA (157 aa). 52-54 lines the substrate pocket; that stretch reads NGG. Positions 61 and 65 each coordinate Zn(2+). Substrate is bound by residues glutamate 65, 93-94, 119-121, serine 124, and glutamine 172; these read ND and STS. 2 residues coordinate Zn(2+): glutamine 172 and histidine 180.

This sequence belongs to the SIS family. GmhA subfamily. As to quaternary structure, homotetramer. Zn(2+) serves as cofactor.

The protein resides in the cytoplasm. The enzyme catalyses 2 D-sedoheptulose 7-phosphate = D-glycero-alpha-D-manno-heptose 7-phosphate + D-glycero-beta-D-manno-heptose 7-phosphate. It functions in the pathway carbohydrate biosynthesis; D-glycero-D-manno-heptose 7-phosphate biosynthesis; D-glycero-alpha-D-manno-heptose 7-phosphate and D-glycero-beta-D-manno-heptose 7-phosphate from sedoheptulose 7-phosphate: step 1/1. Functionally, catalyzes the isomerization of sedoheptulose 7-phosphate in D-glycero-D-manno-heptose 7-phosphate. The protein is Phosphoheptose isomerase of Yersinia enterocolitica serotype O:8 / biotype 1B (strain NCTC 13174 / 8081).